The sequence spans 990 residues: Activator of stress genes protein 1 (990 aa).

A disordered region spans residues 1–88 (MPKREIEDTQ…NKPKSQENKR (88 aa)). Residues 9-23 (TQSPYSSTGLVSTGE) are compositionally biased toward polar residues. The segment covering 24–61 (SPKTSTSTPTSSTNNRAATTTTNNTSTTSTSLLKSNSN) has biased composition (low complexity). The segment at residues 95 to 121 (CDTCRQKKVKCDGKQPCIHCTVYSYKC) is a DNA-binding region (zn(2)-C6 fungal-type). Low complexity-rich tracts occupy residues 160–179 (NNNS…QQHV), 282–293 (SFDDSSNSAVSS), and 773–793 (TATT…NSNS). Disordered regions lie at residues 160 to 192 (NNNS…PADE), 255 to 295 (QDPD…SSPR), 764 to 800 (RTAS…TLPA), and 915 to 944 (SNNN…NGVA).

The protein belongs to the ASG1 family.

It is found in the nucleus. In terms of biological role, transcription factor necessary to sustain growth on non-fermentative carbon sources such as sodium acetate, acetic acid, or ethanol. Plays a role in hyphal formation. This Candida albicans (strain SC5314 / ATCC MYA-2876) (Yeast) protein is Activator of stress genes protein 1 (ASG1).